The chain runs to 678 residues: ATP-dependent RNA helicase DHX58 (678 aa).

The 178-residue stretch at 11–188 folds into the Helicase ATP-binding domain; it reads IMPALEGKNI…DGAINHVLQL (178 aa). 24–31 contributes to the ATP binding site; it reads LPTGAGKT. The short motif at 131 to 134 is the DECH box element; sequence DECH. The Helicase C-terminal domain maps to 350-514; sequence KLEMLEKILQ…QAVAAVQKMD (165 aa). Residues 489–546 are a coiled coil; sequence ELKRELINEALETLMEQAVAAVQKMDQAEYQAKIRDLQQAALTKRAAQAAQRENQRQQ. The RLR CTR domain maps to 539–669; it reads QRENQRQQFP…PDFDFLQHCA (131 aa). Positions 556, 559, 612, and 615 each coordinate Zn(2+). The RNA-binding stretch occupies residues 572–655; that stretch reads VEGTHHVNVN…RIQAKKWSRV (84 aa).

Belongs to the helicase family. RLR subfamily. As to quaternary structure, monomer in the absence of dsRNA. Homodimer in the presence of dsRNA. Interacts with RIGI (via CARD domain), MAVS/IPS1 and DDX60. Found in a complex with RIGI and IFIH1/MDA5. Interacts with ANKRD17. Directly interacts with ATG5 and ATG12, either as ATG5 and ATG12 monomers or as ATG12-ATG5 conjugates. (Microbial infection) Interacts (via helicase C-terminal domain) with non-structural protein V of paramyxoviruses including human parainfluenza 2 virus, human parainfluenza 5 virus, measles virus, mumps virus, hendra virus and nipah virus. Expressed in testis, nerve and spleen. Also expressed in the brain.

The protein localises to the cytoplasm. The enzyme catalyses ATP + H2O = ADP + phosphate + H(+). Functionally, acts as a regulator of RIGI and IFIH1/MDA5 mediated antiviral signaling. Cannot initiate antiviral signaling as it lacks the CARD domain required for activating MAVS/IPS1-dependent signaling events. Can have both negative and positive regulatory functions related to RIGI and IFIH1/MDA5 signaling and this role in regulating signaling may be complex and could probably depend on characteristics of the infecting virus or target cells, or both. Its inhibitory action on RIG-I signaling may involve the following mechanisms: competition with RIGI for binding to the viral RNA, binding to RIGI and inhibiting its dimerization and interaction with MAVS/IPS1, competing with IKBKE in its binding to MAVS/IPS1 thereby inhibiting activation of interferon regulatory factor 3 (IRF3). Its positive regulatory role may involve unwinding or stripping nucleoproteins of viral RNA thereby facilitating their recognition by RIGI and IFIH1/MDA5. Involved in the innate immune response to various RNA viruses and some DNA viruses such as poxviruses and coronavirus SARS-CoV-2, and also to the bacterial pathogen Listeria monocytogenes. Can bind both ssRNA and dsRNA, with a higher affinity for dsRNA. Shows a preference to 5'-triphosphorylated RNA, although it can recognize RNA lacking a 5'-triphosphate. The chain is ATP-dependent RNA helicase DHX58 from Homo sapiens (Human).